We begin with the raw amino-acid sequence, 477 residues long: UDP-N-acetylmuramate--L-alanine ligase (477 aa).

Residue 122-128 (GTHGKTT) participates in ATP binding.

The protein belongs to the MurCDEF family.

It is found in the cytoplasm. The enzyme catalyses UDP-N-acetyl-alpha-D-muramate + L-alanine + ATP = UDP-N-acetyl-alpha-D-muramoyl-L-alanine + ADP + phosphate + H(+). Its pathway is cell wall biogenesis; peptidoglycan biosynthesis. Its function is as follows. Cell wall formation. This is UDP-N-acetylmuramate--L-alanine ligase from Xylella fastidiosa (strain M23).